A 223-amino-acid chain; its full sequence is Probable transaldolase (223 aa).

The active-site Schiff-base intermediate with substrate is the K91.

The protein belongs to the transaldolase family. Type 3B subfamily.

The protein resides in the cytoplasm. The enzyme catalyses D-sedoheptulose 7-phosphate + D-glyceraldehyde 3-phosphate = D-erythrose 4-phosphate + beta-D-fructose 6-phosphate. The protein operates within carbohydrate degradation; pentose phosphate pathway; D-glyceraldehyde 3-phosphate and beta-D-fructose 6-phosphate from D-ribose 5-phosphate and D-xylulose 5-phosphate (non-oxidative stage): step 2/3. Functionally, transaldolase is important for the balance of metabolites in the pentose-phosphate pathway. The polypeptide is Probable transaldolase (Chlorobium phaeobacteroides (strain BS1)).